Here is an 89-residue protein sequence, read N- to C-terminus: Small ribosomal subunit protein uS19 (89 aa).

The protein belongs to the universal ribosomal protein uS19 family.

Its function is as follows. Protein S19 forms a complex with S13 that binds strongly to the 16S ribosomal RNA. This chain is Small ribosomal subunit protein uS19, found in Porphyromonas gingivalis (strain ATCC 33277 / DSM 20709 / CIP 103683 / JCM 12257 / NCTC 11834 / 2561).